A 247-amino-acid chain; its full sequence is uncharacterized protein (247 aa).

The next 2 helical transmembrane spans lie at 9–29 and 37–57; these read IIAI…FLIF and SYFL…SLII.

It is found in the cell membrane. This is an uncharacterized protein from Methanocaldococcus jannaschii (strain ATCC 43067 / DSM 2661 / JAL-1 / JCM 10045 / NBRC 100440) (Methanococcus jannaschii).